Here is a 162-residue protein sequence, read N- to C-terminus: Phosphopantetheine adenylyltransferase (162 aa).

Position 14 (T14) interacts with substrate. Residues 14 to 15 (TF) and H22 contribute to the ATP site. Substrate-binding residues include K46, L78, and R92. Residues 93-95 (GLR), E103, and 128-134 (HSFISSS) each bind ATP.

The protein belongs to the bacterial CoaD family. As to quaternary structure, homohexamer. The cofactor is Mg(2+).

It is found in the cytoplasm. It catalyses the reaction (R)-4'-phosphopantetheine + ATP + H(+) = 3'-dephospho-CoA + diphosphate. The protein operates within cofactor biosynthesis; coenzyme A biosynthesis; CoA from (R)-pantothenate: step 4/5. Its function is as follows. Reversibly transfers an adenylyl group from ATP to 4'-phosphopantetheine, yielding dephospho-CoA (dPCoA) and pyrophosphate. The sequence is that of Phosphopantetheine adenylyltransferase from Xylella fastidiosa (strain M23).